A 467-amino-acid polypeptide reads, in one-letter code: Coiled-coil domain-containing protein 174 (467 aa).

Disordered stretches follow at residues 40-77 and 124-162; these read VFGK…EEQK and EMEA…SEEW. Residues 63-99 adopt a coiled-coil conformation; that stretch reads NRAEKDAEQKIEEQKTLDKAREKLEEKAKLYEKMTKG. 2 stretches are compositionally biased toward basic and acidic residues: residues 64 to 77 and 124 to 139; these read RAEK…EEQK and EMEA…KAGE. Ser-197 carries the phosphoserine modification. Residues 267-309 adopt a coiled-coil conformation; sequence LEMLREQTTDQRTKRENIKEKRKAILEARLAKLRQKKMKKSKE. 2 disordered regions span residues 299–363 and 378–453; these read LRQK…HIRE and RQSD…TVTF. Positions 324–336 are enriched in pro residues; that stretch reads PLPPEPEAVPTPR. 2 stretches are compositionally biased toward basic and acidic residues: residues 348–363 and 378–389; these read VQER…HIRE and RQSDLRAERDPE. The span at 425–437 shows a compositional bias: polar residues; sequence PDQSHGPSPEHTS. Over residues 439 to 448 the composition is skewed to pro residues; the sequence is TPAPDNPPQA.

Widely expressed.

The protein resides in the nucleus. Functionally, probably involved in neuronal development. The protein is Coiled-coil domain-containing protein 174 (CCDC174) of Homo sapiens (Human).